The chain runs to 803 residues: MLQNVTPHSKLPGEGNAGLLGLGPEAAAPGKRIRKPSLLYEGFESPTMASVPALQLTPANPPPPEVSNPKKPGRVTNQLQYLHKVVMKALWKHQFAWPFRQPVDAVKLGLPDYHKIIKQPMDMGTIKRRLENNYYWAASECMQDFNTMFTNCYIYNKPTDDIVLMAQTLEKIFLQKVASMPQEEQELVVTIPKNSHKKGAKLAALQGSITSAHQVPAVSSVSHTALYTPPPEIPTTVLNIPHPSVISSPLLKSLHSAGPQLLAVSAAPPAQPLAKKKGVKRKADTTTPTPTAILAPGSPASPPGSLEAKAARLPPMRRESGRPIKPPRKDLPDSQQQHQSSKKGKLSEQLKHCNGILKELLSKKHAAYAWPFYKPVDASALGLHDYHDIIKHPMDLSTVKRKMENRDYRDAQEFAADVRLMFSNCYKYNPPDHDVVAMARKLQDVFEFRYAKMPDEPLEPGPLPVSTALPPGLAKSSSESSSEESSSESSSEEDEEEDEEEEEEEEESESSDSEEERAHRLAELQEQLRAVHEQLAALSQGPISKPKRKREKKEKKKKRKAEKHRGRAGVDEDDKGSRAPRPSQPKKSKKASGSGGGSAATLGPPGFGPSGGSGTKLPKKATKTAPPALPTGYDSEEEEESRPMSYDEKRQLSLDINKLPGEKLGRVVHIIQAREPSLRDSNPEEIEIDFETLKPSTLRELERYVLSCLRKKPRKPYTIKKPVGKTKEELALEKKRELEKRLQDVSGQLNSTKKPPKKASEKTESSSTQQVAVSRLSASSSSSDSSSSSSSSSSSDTSDSDSG.

Methionine 1 is modified (N-acetylmethionine). The disordered stretch occupies residues 1-28 (MLQNVTPHSKLPGEGNAGLLGLGPEAAA). The residue at position 6 (threonine 6) is a Phosphothreonine. Serine 37 carries the post-translational modification Phosphoserine. The interval 53-73 (ALQLTPANPPPPEVSNPKKPG) is disordered. Residues 74–180 (RVTNQLQYLH…KIFLQKVASM (107 aa)) enclose the Bromo 1 domain. Residues aspartate 112, tyrosine 155, asparagine 156, lysine 157, aspartate 160, and aspartate 161 each coordinate a protein. Disordered regions lie at residues 268–349 (PPAQ…LSEQ), 456–653 (EPLE…RQLS), and 739–803 (EKRL…SDSG). Over residues 285–298 (TTTPTPTAILAPGS) the composition is skewed to low complexity. A phosphoserine mark is found at serine 298, serine 301, and serine 305. Over residues 316–332 (MRRESGRPIKPPRKDLP) the composition is skewed to basic and acidic residues. The region spanning 344-453 (GKLSEQLKHC…DVFEFRYAKM (110 aa)) is the Bromo 2 domain. Acidic residues predominate over residues 481–515 (SSEESSSESSSEEDEEEDEEEEEEEEESESSDSEE). Residues 545 to 567 (KPKRKREKKEKKKKRKAEKHRGR) are compositionally biased toward basic residues. The Nuclear localization signal signature appears at 556–560 (KKKRK). One can recognise an NET domain in the interval 634-716 (DSEEEEESRP…SCLRKKPRKP (83 aa)). Residue serine 635 is modified to Phosphoserine. The span at 641 to 652 (SRPMSYDEKRQL) shows a compositional bias: basic and acidic residues. Positions 777-797 (SASSSSSDSSSSSSSSSSSDT) are enriched in low complexity.

Belongs to the BET family. As to quaternary structure, homodimer. Interacts with E2F1. Interacts with (acetylated) STAT3; promoting STAT3 recruitment to chromatin. Interacts with CTCF; promoting BRD2 recruitment to chromatin.

It localises to the nucleus. The protein localises to the chromosome. Functionally, chromatin reader protein that specifically recognizes and binds histone H4 acetylated at 'Lys-5' and 'Lys-12' (H4K5ac and H4K12ac, respectively), thereby controlling gene expression and remodeling chromatin structures. Recruits transcription factors and coactivators to target gene sites, and activates RNA polymerase II machinery for transcriptional elongation. Plays a key role in genome compartmentalization via its association with CTCF and cohesin: recruited to chromatin by CTCF and promotes formation of topologically associating domains (TADs) via its ability to bind acetylated histones, contributing to CTCF boundary formation and enhancer insulation. Also recognizes and binds acetylated non-histone proteins, such as STAT3. Involved in inflammatory response by regulating differentiation of naive CD4(+) T-cells into T-helper Th17: recognizes and binds STAT3 acetylated at 'Lys-87', promoting STAT3 recruitment to chromatin. In addition to acetylated lysines, also recognizes and binds lysine residues on histones that are both methylated and acetylated on the same side chain to form N6-acetyl-N6-methyllysine (Kacme), an epigenetic mark of active chromatin associated with increased transcriptional initiation. Specifically binds histone H4 acetyl-methylated at 'Lys-5' and 'Lys-12' (H4K5acme and H4K12acme, respectively). The sequence is that of Bromodomain-containing protein 2 (BRD2) from Canis lupus familiaris (Dog).